The primary structure comprises 962 residues: MDTMRISGVSTGAEVLIQCNSLSSLVSRRCDDGKWRTRMFPARNRDLRPSPTRRSFLSVKSISSEPKAKVTDAVLDSEQEVFISSMNPFAPDAASVASSIKYHAEFTPLFSPEKFELPKAFFATAQSVRDALIMNWNATYEYYNRVNVKQAYYLSMEFLQGRALSNAVGNLGLNSAYGDALKRLGFDLESVASQEPDPALGNGGLGRLASCFLDSMATLNYPAWGYGLRYKYGLFKQRITKDGQEEAAEDWLELSNPWEIVRNDVSYPIKFYGKVVFGSDGKKRWIGGEDIVAVAYDVPIPGYKTKTTINLRLWSTKAPSEDFDLSSYNSGKHTEAAEALFNAEKICFVLYPGDESTEGKALRLKQQYTLCSASLQDIVARFETRSGGNVNWEEFPEKVAVQMNDTHPTLCIPELMRILMDLKGLSWEDAWKITQRTVAYTNHTVLPEALEKWSLELMEKLLPRHVEIIEKIDEELVRTIVSEYGTADPDLLEEKLKAMRILENVELPSAFADVIVKPVNKPVTAKDAQNGVKTEQEEEKTAGEEEEDEVIPEPTVEPPKMVRMANLAVVGGHAVNGVAEIHSEIVKQDVFNDFVQLWPEKFQNKTNGVTPRRWIRFCNPYLSDIITNWIGTEDWVLNTEKVAELRKFADNEDLQSEWRAAKKKNKLKVVSLIKERTGYTVSPDAMFDIQIKRIHEYKRQLLNILGIVYRYKKMKEMSASEREKAFVPRVCIFGGKAFATYVQAKRIVKFITDVASTINHDPEIGDLLKVIFVPDYNVSVAELLIPASELSQHISTAGMEASGTSNMKFSMNGCVLIGTLDGANVEIREEVGEENFFLFGAKADQIVNLRKERAEGKFVPDPTFEEVKKFVGSGVFGSNSYDELIGSLEGNEGFGRADYFLVGKDFPSYIECQEKVDEAYRDQKRWTRMSIMNTAGSFKFSSDRTIHEYAKDIWNIKQVELP.

Residues 1 to 63 constitute a chloroplast transit peptide; that stretch reads MDTMRISGVS…RSFLSVKSIS (63 aa). The interval 525–552 is disordered; sequence AKDAQNGVKTEQEEEKTAGEEEEDEVIP. The residue at position 808 (Lys-808) is an N6-(pyridoxal phosphate)lysine.

The protein belongs to the glycogen phosphorylase family. Requires pyridoxal 5'-phosphate as cofactor.

Its subcellular location is the plastid. It is found in the chloroplast stroma. The catalysed reaction is [(1-&gt;4)-alpha-D-glucosyl](n) + phosphate = [(1-&gt;4)-alpha-D-glucosyl](n-1) + alpha-D-glucose 1-phosphate. In terms of biological role, phosphorylase is an important allosteric enzyme in carbohydrate metabolism. Enzymes from different sources differ in their regulatory mechanisms and in their natural substrates. However, all known phosphorylases share catalytic and structural properties. May be not required for the degradation of starch, but the phosphorolysis of starch may play an important role in water stress tolerance. The polypeptide is Alpha-glucan phosphorylase 1 (PHS1) (Arabidopsis thaliana (Mouse-ear cress)).